Reading from the N-terminus, the 143-residue chain is Large ribosomal subunit protein uL11 (143 aa).

Belongs to the universal ribosomal protein uL11 family. As to quaternary structure, part of the ribosomal stalk of the 50S ribosomal subunit. Interacts with L10 and the large rRNA to form the base of the stalk. L10 forms an elongated spine to which L12 dimers bind in a sequential fashion forming a multimeric L10(L12)X complex. One or more lysine residues are methylated.

Its function is as follows. Forms part of the ribosomal stalk which helps the ribosome interact with GTP-bound translation factors. This is Large ribosomal subunit protein uL11 from Bifidobacterium adolescentis (strain ATCC 15703 / DSM 20083 / NCTC 11814 / E194a).